We begin with the raw amino-acid sequence, 372 residues long: Phospho-N-acetylmuramoyl-pentapeptide-transferase (372 aa).

A run of 10 helical transmembrane segments spans residues 25-45 (RSLL…PIMI), 73-93 (TMGG…WADL), 98-118 (VWIV…DDWI), 134-154 (FFWT…IATQ), 176-196 (SIPL…YLVI), 211-231 (GLAI…AYLS), 251-271 (LVVI…YNAH), 275-295 (VFMG…IAVM), 300-320 (IVFA…FLQI), and 349-369 (QVVI…LMTL).

This sequence belongs to the glycosyltransferase 4 family. MraY subfamily. It depends on Mg(2+) as a cofactor.

It localises to the cell inner membrane. It catalyses the reaction UDP-N-acetyl-alpha-D-muramoyl-L-alanyl-gamma-D-glutamyl-meso-2,6-diaminopimeloyl-D-alanyl-D-alanine + di-trans,octa-cis-undecaprenyl phosphate = di-trans,octa-cis-undecaprenyl diphospho-N-acetyl-alpha-D-muramoyl-L-alanyl-D-glutamyl-meso-2,6-diaminopimeloyl-D-alanyl-D-alanine + UMP. It participates in cell wall biogenesis; peptidoglycan biosynthesis. Catalyzes the initial step of the lipid cycle reactions in the biosynthesis of the cell wall peptidoglycan: transfers peptidoglycan precursor phospho-MurNAc-pentapeptide from UDP-MurNAc-pentapeptide onto the lipid carrier undecaprenyl phosphate, yielding undecaprenyl-pyrophosphoryl-MurNAc-pentapeptide, known as lipid I. The sequence is that of Phospho-N-acetylmuramoyl-pentapeptide-transferase from Acinetobacter baumannii (strain AB0057).